We begin with the raw amino-acid sequence, 108 residues long: ATP synthase peripheral stalk subunit F6, mitochondrial (108 aa).

The N-terminal 32 residues, 1–32 (MILQRLFRLSSAVQSAISVSWRRNIGITAVAF), are a transit peptide targeting the mitochondrion. 3 positions are modified to N6-acetyllysine: lysine 41, lysine 46, and lysine 79. Lysine 84 and lysine 99 each carry N6-acetyllysine; alternate. N6-succinyllysine; alternate is present on residues lysine 84 and lysine 99. At lysine 105 the chain carries N6-acetyllysine. A Phosphoserine modification is found at serine 108.

This sequence belongs to the eukaryotic ATPase subunit F6 family. In terms of assembly, component of the ATP synthase complex composed at least of ATP5F1A/subunit alpha, ATP5F1B/subunit beta, ATP5MC1/subunit c (homooctomer), MT-ATP6/subunit a, MT-ATP8/subunit 8, ATP5ME/subunit e, ATP5MF/subunit f, ATP5MG/subunit g, ATP5MK/subunit k, ATP5MJ/subunit j, ATP5F1C/subunit gamma, ATP5F1D/subunit delta, ATP5F1E/subunit epsilon, ATP5PF/subunit F6, ATP5PB/subunit b, ATP5PD/subunit d, ATP5PO/subunit OSCP. ATP synthase complex consists of a soluble F(1) head domain (subunits alpha(3) and beta(3)) - the catalytic core - and a membrane F(0) domain - the membrane proton channel (subunits c, a, 8, e, f, g, k and j). These two domains are linked by a central stalk (subunits gamma, delta, and epsilon) rotating inside the F1 region and a stationary peripheral stalk (subunits F6, b, d, and OSCP).

The protein resides in the mitochondrion. Its subcellular location is the mitochondrion inner membrane. Functionally, subunit F6, of the mitochondrial membrane ATP synthase complex (F(1)F(0) ATP synthase or Complex V) that produces ATP from ADP in the presence of a proton gradient across the membrane which is generated by electron transport complexes of the respiratory chain. ATP synthase complex consist of a soluble F(1) head domain - the catalytic core - and a membrane F(1) domain - the membrane proton channel. These two domains are linked by a central stalk rotating inside the F(1) region and a stationary peripheral stalk. During catalysis, ATP synthesis in the catalytic domain of F(1) is coupled via a rotary mechanism of the central stalk subunits to proton translocation. In vivo, can only synthesize ATP although its ATP hydrolase activity can be activated artificially in vitro. Part of the complex F(0) domain. Part of the complex F(0) domain and the peripheric stalk, which acts as a stator to hold the catalytic alpha(3)beta(3) subcomplex and subunit a/ATP6 static relative to the rotary elements. In Bos taurus (Bovine), this protein is ATP synthase peripheral stalk subunit F6, mitochondrial.